The following is a 322-amino-acid chain: Pre-mRNA-splicing factor NTR2 (322 aa).

Residues 1–30 (MAIKKRNKIRLPSGSPEEVGIDGSAHKPMQ) form a disordered region. Residue serine 40 is modified to Phosphoserine. A disordered region spans residues 113–137 (LLSDSSEAGSSSEGEHISSIPTRGE). A compositionally biased stretch (low complexity) spans 115 to 132 (SDSSEAGSSSEGEHISSI). Residues serine 153 and serine 197 each carry the phosphoserine modification.

Component of the NTR complex (NTC-related complex), composed of NTR1, NTR2 and PRP43. Interacts with CLF1, NTR1 and PRP43.

The protein localises to the cytoplasm. It is found in the nucleus. Its function is as follows. Involved in pre-mRNA splicing and spliceosome disassembly. Promotes release of excised lariat intron from the spliceosome by acting as a receptor for PRP43. This targeting of PRP43 leads to disassembly of the spliceosome with the separation of the U2, U5, U6 snRNPs and the NTC complex. This chain is Pre-mRNA-splicing factor NTR2 (NTR2), found in Saccharomyces cerevisiae (strain ATCC 204508 / S288c) (Baker's yeast).